A 143-amino-acid polypeptide reads, in one-letter code: Nucleoside diphosphate kinase (143 aa).

Residues Lys11, Phe59, Arg87, Thr93, Arg104, and Asn114 each coordinate ATP. His117 (pros-phosphohistidine intermediate) is an active-site residue.

This sequence belongs to the NDK family. In terms of assembly, homotetramer. Mg(2+) is required as a cofactor.

It is found in the cytoplasm. It catalyses the reaction a 2'-deoxyribonucleoside 5'-diphosphate + ATP = a 2'-deoxyribonucleoside 5'-triphosphate + ADP. The enzyme catalyses a ribonucleoside 5'-diphosphate + ATP = a ribonucleoside 5'-triphosphate + ADP. Its function is as follows. Major role in the synthesis of nucleoside triphosphates other than ATP. The ATP gamma phosphate is transferred to the NDP beta phosphate via a ping-pong mechanism, using a phosphorylated active-site intermediate. The polypeptide is Nucleoside diphosphate kinase (Shewanella halifaxensis (strain HAW-EB4)).